We begin with the raw amino-acid sequence, 340 residues long: Porphobilinogen deaminase (340 aa).

Position 258 is an S-(dipyrrolylmethanemethyl)cysteine (Cys-258).

It belongs to the HMBS family. Dipyrromethane is required as a cofactor.

The catalysed reaction is 4 porphobilinogen + H2O = hydroxymethylbilane + 4 NH4(+). It participates in porphyrin-containing compound metabolism; protoporphyrin-IX biosynthesis; coproporphyrinogen-III from 5-aminolevulinate: step 2/4. Tetrapolymerization of the monopyrrole PBG into the hydroxymethylbilane pre-uroporphyrinogen in several discrete steps. The sequence is that of Porphobilinogen deaminase (HEM3) from Candida albicans (strain SC5314 / ATCC MYA-2876) (Yeast).